The following is a 492-amino-acid chain: Putative BTB/POZ domain and WD-repeat protein R786 (492 aa).

Residues 16 to 86 enclose the BTB domain; sequence TDVEIVLIDE…FYGQIVDSTN (71 aa). 2 WD repeats span residues 241–281 and 286–325; these read QSSC…IKIK and LINR…SKGI.

It belongs to the mimivirus BTB/WD family.

This chain is Putative BTB/POZ domain and WD-repeat protein R786, found in Acanthamoeba polyphaga (Amoeba).